Consider the following 161-residue polypeptide: Anaerobic nitrite reductase Glb1-2 (161 aa).

The Globin domain occupies 9–158; it reads AFTEEQEALV…LASAIIAEMK (150 aa). The Homodimerization signature appears at 42–46; that stretch reads EIAPP. 6 residues coordinate heme b: Ser52, Lys66, His70, Lys100, Thr104, and His105. A Homodimerization motif is present at residues 112-124; it reads PEHFEVTKQALLD.

The protein belongs to the plant globin family. Homodimer. Requires heme b as cofactor. Mainly expressed in root nodules and leaves, and, to a lower extent, in roots, stems, flowers and fruits. Accumulates in mature root nodules.

The catalysed reaction is Fe(III)-heme b-[protein] + nitric oxide + H2O = Fe(II)-heme b-[protein] + nitrite + 2 H(+). In terms of biological role, phytoglobin that reduces nitrite to nitric oxide (NO) under anoxic conditions (e.g. during flooding or in waterlogged soil) and upon root nodulation. Required for general plant development and during nodulation, especially for the onset of symbiosis. Monitors nitric oxide (NO) levels during early phase of the nitrogen-fixing symbiosis and buffers oxygen in functioning nodules. Necessary for the production of pods. May not function as an oxygen storage or transport protein. Has an unusually high affinity for O(2) through a hexacoordinate heme iron because of a very low dissociation constant. In Lotus japonicus (Lotus corniculatus var. japonicus), this protein is Anaerobic nitrite reductase Glb1-2.